The chain runs to 918 residues: MASLSRALRVAAAHPRQSPTRGMGPCNLSSAAGPTAEKSVPYQRTLKEGQGTSVVAQGPSRPLPSTANVVVIGGGSLGCQTLYHLAKLGMSGAVLLERERLTSGTTWHTAGLLWQLRPSDVEVELLAHTRRVVSRELEEETGLHTGWIQNGGLFIASNRQRLDEYKRLMSLGKAYGVESHVLSPAETKTLYPLMNVDDLYGTLYVPHDGTMDPAGTCTTLARAASARGAQVIENCPVTGIRVWTDDFGVRRVAGVETQHGSIQTPCVVNCAGVWASAVGRMAGVKVPLVAMHHAYVVTERIEGIQNMPNVRDHDASVYLRLQGDALSVGGYEANPIFWEEVSDKFAFGLFDLDWEVFTQHIEGAINRVPVLEKTGIKSTVCGPESFTPDHKPLMGEAPELRGFFLGCGFNSAGMMLGGGCGQELAHWIIHGRPEKDMHGYDIRRFHHSLTDHPRWIRERSHESYAKNYSVVFPHDEPLAGRNMRRDPLHEELLGQGCVFQERHGWERPGWFHPRGPAPVLEYDYYGAYGSRAHEDYAYRRLLADEYTFAFPPHHDTIKKECLACRGAAAVFDMSYFGKFYLVGLDARKAADWLFSADVSRPPGSTVYTCMLNHRGGTESDLTVSRLAPSHQASPLAPAFEGDGYYLAMGGAVAQHNWSHITTVLQDQKSQCQLIDSSEDLGMISIQGPASRAILQEVLDADLSNEAFPFSTHKLLRAAGHLVRAMRLSFVGELGWELHIPKASCVPVYRAVMAAGAKHGLINAGYRAIDSLSIEKGYRHWHADLRPDDSPLEAGLAFTCKLKSPVPFLGREALEQQRAAGLRRRLVCFTMEDKVPMFGLEAIWRNGQVVGHVRRADFGFAIDKTIAYGYIHDPSGGPVSLDFVKSGDYALERMGVTYGAQAHLKSPFDPNNKRVKGIY.

The span at 1–13 (MASLSRALRVAAA) shows a compositional bias: low complexity. A mitochondrion-targeting transit peptide spans 1–22 (MASLSRALRVAAAHPRQSPTRG). The disordered stretch occupies residues 1 to 40 (MASLSRALRVAAAHPRQSPTRGMGPCNLSSAAGPTAEKSV). The residue at position 38 (lysine 38) is an N6-succinyllysine. Histidine 108 is modified (tele-8alpha-FAD histidine). Lysine 173 carries the post-translational modification N6-acetyllysine; alternate. Lysine 173 bears the N6-succinyllysine; alternate mark. Residues lysine 377 and lysine 391 each carry the N6-succinyllysine modification. N6-acetyllysine occurs at positions 559 and 775. Residue tyrosine 777 is modified to Phosphotyrosine. Residues lysine 802, lysine 884, and lysine 904 each carry the N6-acetyllysine; alternate modification. Residues lysine 802, lysine 884, and lysine 904 each carry the N6-succinyllysine; alternate modification.

This sequence belongs to the GcvT family. FAD serves as cofactor. In terms of tissue distribution, expressed in pancreas, liver and kidney.

Its subcellular location is the mitochondrion matrix. The enzyme catalyses (6S)-5,6,7,8-tetrahydrofolyl-(gamma-L-Glu)(n) + sarcosine + oxidized [electron-transfer flavoprotein] + H(+) = (6R)-5,10-methylenetetrahydrofolyl-(gamma-L-Glu)(n) + reduced [electron-transfer flavoprotein] + glycine. Its pathway is amine and polyamine degradation; sarcosine degradation; formaldehyde and glycine from sarcosine: step 1/1. Functionally, catalyzes the last step of the oxidative degradation of choline to glycine. Converts sarcosine into glycine. This is Sarcosine dehydrogenase, mitochondrial from Homo sapiens (Human).